A 141-amino-acid polypeptide reads, in one-letter code: Large ribosomal subunit protein uL11 (141 aa).

This sequence belongs to the universal ribosomal protein uL11 family. As to quaternary structure, part of the ribosomal stalk of the 50S ribosomal subunit. Interacts with L10 and the large rRNA to form the base of the stalk. L10 forms an elongated spine to which L12 dimers bind in a sequential fashion forming a multimeric L10(L12)X complex. In terms of processing, one or more lysine residues are methylated.

Its function is as follows. Forms part of the ribosomal stalk which helps the ribosome interact with GTP-bound translation factors. In Chlamydia trachomatis serovar A (strain ATCC VR-571B / DSM 19440 / HAR-13), this protein is Large ribosomal subunit protein uL11.